The following is a 242-amino-acid chain: ATP synthase subunit a (242 aa).

5 consecutive transmembrane segments (helical) span residues 28-48 (LHGQ…LLVV), 89-109 (LPFV…GALI), 128-148 (INTT…AGLS), 193-213 (LVVA…AMFL), and 214-234 (GLFT…NYIG).

The protein belongs to the ATPase A chain family. As to quaternary structure, F-type ATPases have 2 components, CF(1) - the catalytic core - and CF(0) - the membrane proton channel. CF(1) has five subunits: alpha(3), beta(3), gamma(1), delta(1), epsilon(1). CF(0) has four main subunits: a, b, b' and c.

The protein resides in the cellular thylakoid membrane. Its function is as follows. Key component of the proton channel; it plays a direct role in the translocation of protons across the membrane. This is ATP synthase subunit a from Synechococcus sp. (strain WH7803).